The sequence spans 1386 residues: Restriction of telomere capping protein 1 (1386 aa).

Over residues 31 to 56 (LEGNSSASPTPSMNPKQHNKSGTSSS) the composition is skewed to polar residues. Residues 31–58 (LEGNSSASPTPSMNPKQHNKSGTSSSNK) are disordered. 4 WD repeats span residues 180 to 227 (DHIR…NKPT), 234 to 278 (SHSD…GGYQ), 290 to 329 (FHTG…THQN), and 382 to 428 (NERE…IPKE). Composition is skewed to low complexity over residues 595–606 (NPSFSNSVSPPF) and 649–663 (GNNN…VSGN). Disordered regions lie at residues 595–629 (NPSF…PPKP), 647–691 (EHGN…IQGY), 844–958 (TSTS…SQFG), 991–1021 (ASPI…SNHR), and 1090–1157 (SPNY…SRTE). Over residues 669–690 (LNRNHSQSTQGSNVSLSSSIQG) the composition is skewed to polar residues. Residues 859–872 (SNNIELSNANNNGS) are compositionally biased toward low complexity. Polar residues-rich tracts occupy residues 884–928 (SNLN…GSTR), 1006–1016 (TTSGSMSPQNK), 1090–1121 (SPNY…GSSR), and 1134–1145 (NKTSYAKQSPVS). Over residues 1148–1157 (LMRDEQSRTE) the composition is skewed to basic and acidic residues. Residues 1171–1212 (IEETKVTSVNFGKSELTRAITGNNTGSPNTLYKPWKTEYLLK) form a WD 5 repeat. Residues 1338-1381 (CIYCDEPCKGLNIVTSLSCGHRGHFGCLREWFIDQENIVCPGGC) form an RING-type; degenerate zinc finger.

Belongs to the WD repeat RTC1 family.

It localises to the vacuole. Functionally, may be involved in a process influencing telomere capping. In Debaryomyces hansenii (strain ATCC 36239 / CBS 767 / BCRC 21394 / JCM 1990 / NBRC 0083 / IGC 2968) (Yeast), this protein is Restriction of telomere capping protein 1 (RTC1).